The following is a 188-amino-acid chain: Vascular endothelial growth factor A-A (188 aa).

Residues 1–23 (MNLVVYLIQLFLAALLHLSAVKA) form the signal peptide. Cystine bridges form between Cys49-Cys91, Cys80-Cys125, and Cys84-Cys127. A glycan (N-linked (GlcNAc...) asparagine) is linked at Asn98.

It belongs to the PDGF/VEGF growth factor family. Homodimer; disulfide-linked. Isoform VEGF165 binds kdr and kdrl. In terms of tissue distribution, predominantly expressed in regions associated with active vascularization. From 15-16 hours post-fertilization (hpf), expressed in the anterior forebrain, the mesoderm underlying and lateral to the anterior hindbrain, the mesoderm underlying and lateral to the posterior hindbrain, and in the ventral medial portions of the somites. By 30-36 hpf, expression in the somites is decreased, while strong expression is observed in the region of the developing glomeruli and in the anterior portion of the pronephric ducts, the pharyngeal arches, and the brain. By 72 hpf, expression remains only in the pronephros region.

The protein localises to the secreted. In terms of biological role, growth factor active in angiogenesis, vasculogenesis and endothelial cell growth. Induces endothelial cell proliferation, promotes cell migration, inhibits apoptosis, and induces permeabilization of blood vessels. Required for intersegmental vessel development in the tail during embryogenesis. Acts both upstream of kdr and tie1 to stimulate endothelial cell differentiation, and upstream of gata1 to stimulate hematopoietic cell differentiation. This is Vascular endothelial growth factor A-A (vegfaa) from Danio rerio (Zebrafish).